A 381-amino-acid chain; its full sequence is GDP-mannose-dependent monoacylated alpha-(1-6)-phosphatidylinositol monomannoside mannosyltransferase (381 aa).

Residues arginine 206, lysine 211, leucine 261, and glutamate 298 each coordinate GDP-alpha-D-mannose.

It belongs to the glycosyltransferase group 1 family. Glycosyltransferase 4 subfamily.

It catalyses the reaction a 1,2-diacyl-sn-glycero-3-phospho-[alpha-D-mannopyranosyl-(1&lt;-&gt;6)-D-myo-inositol] + GDP-alpha-D-mannose = a 2,6-O-bis(alpha-D-mannopyranosyl)-1-phosphatidyl-1D-myo-inositol + GDP + H(+). The catalysed reaction is a 1,2-diacyl-sn-glycero-3-phospho-[alpha-D-6-acyl-mannopyranosyl-(1&lt;-&gt;6)-D-myo-inositol] + GDP-alpha-D-mannose = a 2-O-(alpha-D-mannosyl)-6-O-(6-O-acyl-alpha-D-mannosyl)-1-phosphatidyl-1D-myo-inositol + GDP + H(+). Its pathway is phospholipid metabolism; phosphatidylinositol metabolism. Its function is as follows. Involved in the biosynthesis of phosphatidyl-myo-inositol mannosides (PIM) which are early precursors in the biosynthesis of lipomannans (LM) and lipoarabinomannans (LAM). Catalyzes the addition of a mannosyl residue from GDP-D-mannose (GDP-Man) to the position 6 of a phosphatidyl-myo-inositol bearing an alpha-1,2-linked mannose residue (PIM1) to generate phosphatidyl-myo-inositol bearing alpha-1,2- and alpha-1,6-linked mannose residues (Ac1PIM2). PimB also catalyzes the addition of a mannosyl residue from GDP-Man to the position 6 of phosphatidyl-myo-inositol bearing an acylated alpha-1,2-linked mannose residue (Ac1PIM1) to generate monoacylated phosphatidyl-myo-inositol bearing alpha-1,2- and alpha-1,6-linked mannose residues (Ac1PIM2). The addition of the second mannosyl residue by PimB preferentially occurs before the acylation of the mannosyl residue transferred by PimA. Also able to transfer a mannosyl residue from GDP-Man to the position 6 of a phosphatidyl-myo-inositol (PI), but this reaction is very slow. The sequence is that of GDP-mannose-dependent monoacylated alpha-(1-6)-phosphatidylinositol monomannoside mannosyltransferase from Corynebacterium glutamicum (strain ATCC 13032 / DSM 20300 / JCM 1318 / BCRC 11384 / CCUG 27702 / LMG 3730 / NBRC 12168 / NCIMB 10025 / NRRL B-2784 / 534).